We begin with the raw amino-acid sequence, 489 residues long: UDP-glycosyltransferase 85A1 (489 aa).

UDP-alpha-D-glucose-binding positions include Ser307, 364–366 (CPQ), 381–389 (HCGWNSILE), and 403–406 (FADQ).

This sequence belongs to the UDP-glycosyltransferase family. As to expression, expressed in root tips, lateral root initials, root apex, shoots, leaf periphery, leaf primordia and flowers.

Its function is as follows. Involved in the O-glucosylation of trans-zeatin and dihydrozeatin. Also active in vitro on cis-zeatin. Not active on N-glucosylated substrates. The sequence is that of UDP-glycosyltransferase 85A1 (UGT85A1) from Arabidopsis thaliana (Mouse-ear cress).